A 156-amino-acid polypeptide reads, in one-letter code: Cyanate hydratase (156 aa).

Active-site residues include Arg-96, Glu-99, and Ser-122.

This sequence belongs to the cyanase family.

The catalysed reaction is cyanate + hydrogencarbonate + 3 H(+) = NH4(+) + 2 CO2. Functionally, catalyzes the reaction of cyanate with bicarbonate to produce ammonia and carbon dioxide. This Burkholderia cenocepacia (strain ATCC BAA-245 / DSM 16553 / LMG 16656 / NCTC 13227 / J2315 / CF5610) (Burkholderia cepacia (strain J2315)) protein is Cyanate hydratase.